A 144-amino-acid chain; its full sequence is UPF0102 protein sce2912 (144 aa).

The protein belongs to the UPF0102 family.

The chain is UPF0102 protein sce2912 from Sorangium cellulosum (strain So ce56) (Polyangium cellulosum (strain So ce56)).